The sequence spans 363 residues: Ethanolamine kinase 1 (363 aa).

The protein belongs to the choline/ethanolamine kinase family.

Its subcellular location is the cytoplasm. The enzyme catalyses ethanolamine + ATP = phosphoethanolamine + ADP + H(+). It participates in phospholipid metabolism; phosphatidylethanolamine biosynthesis; phosphatidylethanolamine from ethanolamine: step 1/3. Its function is as follows. Highly specific for ethanolamine phosphorylation. May be a rate-controlling step in phosphatidylethanolamine biosynthesis. The sequence is that of Ethanolamine kinase 1 (Etnk1) from Mus musculus (Mouse).